The sequence spans 488 residues: Bifunctional protein HldE (488 aa).

The tract at residues 1–330 (MIDFDGLSNA…RNILPPASLA (330 aa)) is ribokinase. Position 205–208 (205–208 (NSKE)) interacts with ATP. Residue Asp-275 is part of the active site. The cytidylyltransferase stretch occupies residues 358–488 (FTNGCFDILH…TSLVKRAGGA (131 aa)).

In the N-terminal section; belongs to the carbohydrate kinase PfkB family. It in the C-terminal section; belongs to the cytidylyltransferase family. In terms of assembly, homodimer.

The catalysed reaction is D-glycero-beta-D-manno-heptose 7-phosphate + ATP = D-glycero-beta-D-manno-heptose 1,7-bisphosphate + ADP + H(+). It catalyses the reaction D-glycero-beta-D-manno-heptose 1-phosphate + ATP + H(+) = ADP-D-glycero-beta-D-manno-heptose + diphosphate. Its pathway is nucleotide-sugar biosynthesis; ADP-L-glycero-beta-D-manno-heptose biosynthesis; ADP-L-glycero-beta-D-manno-heptose from D-glycero-beta-D-manno-heptose 7-phosphate: step 1/4. The protein operates within nucleotide-sugar biosynthesis; ADP-L-glycero-beta-D-manno-heptose biosynthesis; ADP-L-glycero-beta-D-manno-heptose from D-glycero-beta-D-manno-heptose 7-phosphate: step 3/4. Functionally, catalyzes the phosphorylation of D-glycero-D-manno-heptose 7-phosphate at the C-1 position to selectively form D-glycero-beta-D-manno-heptose-1,7-bisphosphate. Its function is as follows. Catalyzes the ADP transfer from ATP to D-glycero-beta-D-manno-heptose 1-phosphate, yielding ADP-D-glycero-beta-D-manno-heptose. This Nitrobacter winogradskyi (strain ATCC 25391 / DSM 10237 / CIP 104748 / NCIMB 11846 / Nb-255) protein is Bifunctional protein HldE.